A 343-amino-acid polypeptide reads, in one-letter code: 3-hydroxy-3-methylglutaryl-CoA lyase, cytoplasmic (343 aa).

A lipid anchor (N-myristoyl glycine) is attached at Gly-2. One can recognise a Pyruvate carboxyltransferase domain in the interval 48–315; it reads VKIVEVGPRD…NTGVDLYKVM (268 aa). Substrate is bound at residue Arg-56. A divalent metal cation is bound by residues Asp-57, His-248, and His-250. Cys-281 is an active-site residue. Residue Asn-290 coordinates a divalent metal cation.

Belongs to the HMG-CoA lyase family. It depends on a divalent metal cation as a cofactor.

The protein localises to the cytoplasm. The protein resides in the cytosol. Its subcellular location is the endoplasmic reticulum membrane. The enzyme catalyses (3S)-3-hydroxy-3-methylglutaryl-CoA = acetoacetate + acetyl-CoA. The protein operates within metabolic intermediate metabolism; (S)-3-hydroxy-3-methylglutaryl-CoA degradation; acetoacetate from (S)-3-hydroxy-3-methylglutaryl-CoA: step 1/1. Non-mitochondrial 3-hydroxy-3-methylglutaryl-CoA lyase that catalyzes a cation-dependent cleavage of (S)-3-hydroxy-3-methylglutaryl-CoA into acetyl-CoA and acetoacetate, a key step in ketogenesis, the products of which support energy production in nonhepatic animal tissues. In Mus musculus (Mouse), this protein is 3-hydroxy-3-methylglutaryl-CoA lyase, cytoplasmic (Hmgcll1).